The chain runs to 79 residues: Small proline-rich protein 4 (79 aa).

Residues 1–26 (MSSQQQQRQQQQCPPQRAQQQQVKQP) show a composition bias toward low complexity. A disordered region spans residues 1–79 (MSSQQQQRQQ…AQQASKSKQK (79 aa)). Positions 66–79 (KCPSAQQASKSKQK) are enriched in polar residues.

It belongs to the cornifin (SPRR) family. In terms of processing, cross-linked to membrane proteins by transglutaminase.

Its subcellular location is the cytoplasm. It is found in the cell cortex. Functionally, cross-linked envelope protein of keratinocytes. Involved in UV-induced cornification. This chain is Small proline-rich protein 4 (SPRR4), found in Homo sapiens (Human).